Consider the following 583-residue polypeptide: Chromosomal replication initiator protein DnaA (583 aa).

The tract at residues M1 to M91 is domain I, interacts with DnaA modulators. Disordered stretches follow at residues P86–V179 and V197–D232. The domain II stretch occupies residues M91–T235. Over residues E97 to D106 the composition is skewed to polar residues. Basic and acidic residues-rich tracts occupy residues E126–A135 and Q147–P174. Residues A205 to V226 are compositionally biased toward polar residues. Positions H236–A460 are domain III, AAA+ region. The ATP site is built by G280, G282, K283, and T284. The tract at residues S461 to D583 is domain IV, binds dsDNA.

This sequence belongs to the DnaA family. As to quaternary structure, oligomerizes as a right-handed, spiral filament on DNA at oriC.

The protein localises to the cytoplasm. Functionally, plays an essential role in the initiation and regulation of chromosomal replication. ATP-DnaA binds to the origin of replication (oriC) to initiate formation of the DNA replication initiation complex once per cell cycle. Binds the DnaA box (a 9 base pair repeat at the origin) and separates the double-stranded (ds)DNA. Forms a right-handed helical filament on oriC DNA; dsDNA binds to the exterior of the filament while single-stranded (ss)DNA is stabiized in the filament's interior. The ATP-DnaA-oriC complex binds and stabilizes one strand of the AT-rich DNA unwinding element (DUE), permitting loading of DNA polymerase. After initiation quickly degrades to an ADP-DnaA complex that is not apt for DNA replication. Binds acidic phospholipids. The sequence is that of Chromosomal replication initiator protein DnaA from Bifidobacterium animalis subsp. lactis (strain AD011).